Here is an 887-residue protein sequence, read N- to C-terminus: UPF0182 protein CTC_00086 (887 aa).

7 helical membrane-spanning segments follow: residues 9-29 (FIAI…SFII), 47-67 (FFTI…SIWL), 87-107 (LMIA…SSKY), 146-166 (VLIL…YFII), 195-215 (GKQL…GYII), 242-262 (IYRI…ISII), and 266-286 (IKPI…EGAT).

Belongs to the UPF0182 family.

It is found in the cell membrane. The protein is UPF0182 protein CTC_00086 of Clostridium tetani (strain Massachusetts / E88).